The following is a 274-amino-acid chain: Large ribosomal subunit protein uL2 (274 aa).

Residues 221–256 (RGTAMNPVDHPHGGGEGRNFGKHPVTPWGVPTKGYK) form a disordered region.

Belongs to the universal ribosomal protein uL2 family. Part of the 50S ribosomal subunit. Forms a bridge to the 30S subunit in the 70S ribosome.

Its function is as follows. One of the primary rRNA binding proteins. Required for association of the 30S and 50S subunits to form the 70S ribosome, for tRNA binding and peptide bond formation. It has been suggested to have peptidyltransferase activity; this is somewhat controversial. Makes several contacts with the 16S rRNA in the 70S ribosome. This is Large ribosomal subunit protein uL2 from Hahella chejuensis (strain KCTC 2396).